Here is a 324-residue protein sequence, read N- to C-terminus: Glutathione synthetase (324 aa).

The ATP-grasp domain occupies 133 to 317 (KMYALQFTKA…LAHQVIQWVE (185 aa)). 159-215 (VEAKGATVLKPLGNKAGEGILFLQAGDRNFNSIVELSTQQGRLPVMVQTYLPEAKEG) provides a ligand contact to ATP. 2 residues coordinate Mg(2+): E288 and N290.

The protein belongs to the prokaryotic GSH synthase family. The cofactor is Mg(2+). Mn(2+) is required as a cofactor.

The enzyme catalyses gamma-L-glutamyl-L-cysteine + glycine + ATP = glutathione + ADP + phosphate + H(+). Its pathway is sulfur metabolism; glutathione biosynthesis; glutathione from L-cysteine and L-glutamate: step 2/2. The protein is Glutathione synthetase of Nostoc sp. (strain PCC 7120 / SAG 25.82 / UTEX 2576).